Consider the following 213-residue polypeptide: Dephospho-CoA kinase (213 aa).

Residues Arg3–His202 enclose the DPCK domain. Gly11 to Arg16 is an ATP binding site.

The protein belongs to the CoaE family.

The protein localises to the cytoplasm. It catalyses the reaction 3'-dephospho-CoA + ATP = ADP + CoA + H(+). Its pathway is cofactor biosynthesis; coenzyme A biosynthesis; CoA from (R)-pantothenate: step 5/5. Catalyzes the phosphorylation of the 3'-hydroxyl group of dephosphocoenzyme A to form coenzyme A. The chain is Dephospho-CoA kinase from Bordetella avium (strain 197N).